The sequence spans 192 residues: Nucleoside triphosphate pyrophosphatase (192 aa).

Catalysis depends on Asp-73, which acts as the Proton acceptor.

The protein belongs to the Maf family. A divalent metal cation is required as a cofactor.

The protein resides in the cytoplasm. The catalysed reaction is a ribonucleoside 5'-triphosphate + H2O = a ribonucleoside 5'-phosphate + diphosphate + H(+). The enzyme catalyses a 2'-deoxyribonucleoside 5'-triphosphate + H2O = a 2'-deoxyribonucleoside 5'-phosphate + diphosphate + H(+). Nucleoside triphosphate pyrophosphatase. May have a dual role in cell division arrest and in preventing the incorporation of modified nucleotides into cellular nucleic acids. The sequence is that of Nucleoside triphosphate pyrophosphatase from Ehrlichia canis (strain Jake).